The sequence spans 242 residues: MKNRFNSEDKIILAIDGLDLNQAKLLLEKCPSIKWVKVGLELFVREGPRVVEILKGLNKKIFLDLKFHDIPNTMSAACFQVSKLGVDIISVHSSAGLKALQDSKKASLEGASLANLKPPFVVGITVLTSFSLKDFQTDLDRKNSIEDNVLRLAKLSFDAELDGCVCSPWEVKMLRSIYKNNFELITPGIRLKIDNKDDQNRIMTPNEAIDNGASKLVIGRSISKALDPNKALIEIFKSIDSD.

Residues Asp16, Lys37, 64–73, Thr128, Arg190, Gln199, Gly219, and Arg220 contribute to the substrate site; that span reads DLKFHDIPNT. Catalysis depends on Lys66, which acts as the Proton donor.

The protein belongs to the OMP decarboxylase family. Type 1 subfamily. As to quaternary structure, homodimer.

The catalysed reaction is orotidine 5'-phosphate + H(+) = UMP + CO2. It functions in the pathway pyrimidine metabolism; UMP biosynthesis via de novo pathway; UMP from orotate: step 2/2. Functionally, catalyzes the decarboxylation of orotidine 5'-monophosphate (OMP) to uridine 5'-monophosphate (UMP). The sequence is that of Orotidine 5'-phosphate decarboxylase from Prochlorococcus marinus (strain MIT 9312).